An 84-amino-acid chain; its full sequence is Large ribosomal subunit protein bL27 (84 aa).

The interval 1 to 21 is disordered; it reads MAHKKAGGSTRNGRDSESKRL.

This sequence belongs to the bacterial ribosomal protein bL27 family.

This chain is Large ribosomal subunit protein bL27, found in Baumannia cicadellinicola subsp. Homalodisca coagulata.